The chain runs to 939 residues: Protein translocase subunit SecA 1 (939 aa).

Residues Q85, 103-107 (GEGKT), and D504 contribute to the ATP site. The disordered stretch occupies residues 848–939 (EVPVEDEKPS…QSKGGRRRKK (92 aa)). 3 stretches are compositionally biased toward basic and acidic residues: residues 852–863 (EDEKPSLEKEDA), 872–889 (PEIR…DRLH), and 914–925 (PVRSEADGLTRA). The segment covering 926–939 (ERRKQSKGGRRRKK) has biased composition (basic residues).

It belongs to the SecA family. In terms of assembly, monomer and homodimer. Part of the essential Sec protein translocation apparatus which comprises SecA, SecYEG and auxiliary proteins SecDF. Other proteins may also be involved.

The protein localises to the cell membrane. It is found in the cytoplasm. The enzyme catalyses ATP + H2O + cellular proteinSide 1 = ADP + phosphate + cellular proteinSide 2.. Part of the Sec protein translocase complex. Interacts with the SecYEG preprotein conducting channel. Has a central role in coupling the hydrolysis of ATP to the transfer of proteins into and across the cell membrane, serving as an ATP-driven molecular motor driving the stepwise translocation of polypeptide chains across the membrane. This is Protein translocase subunit SecA 1 from Streptomyces avermitilis (strain ATCC 31267 / DSM 46492 / JCM 5070 / NBRC 14893 / NCIMB 12804 / NRRL 8165 / MA-4680).